Reading from the N-terminus, the 150-residue chain is Autophagy-related protein 16 (150 aa).

Residues 1-23 (MGNFIITERKKAKEERSNPQTDS) are disordered. Residues 7-17 (TERKKAKEERS) show a composition bias toward basic and acidic residues. Positions 61–130 (DDALLNTLAI…KKEHSQLVAR (70 aa)) form a coiled coil.

Belongs to the ATG16 family. Homodimer. Part of the 350 kDa complex which is at least composed of ATG5, ATG12 and ATG16. Several units of each may be present in this complex. Interacts directly with ATG12.

The protein resides in the preautophagosomal structure membrane. Its function is as follows. Stabilizes the ATG5-ATG12 conjugate and mediates the formation of the 350 kDa complex, which is necessary for autophagy. The ATG5-ATG12/ATG16 complex is required for efficient promotion of ATG8-conjugation to phosphatidylethanolamine and ATG8 localization to the pre-autophagosomal structure (PAS). Also recruits ATG3 to the PAS. Involved in endoplasmic reticulum-specific autophagic process and is essential for the survival of cells subjected to severe ER stress. In Saccharomyces cerevisiae (strain YJM789) (Baker's yeast), this protein is Autophagy-related protein 16 (ATG16).